A 570-amino-acid polypeptide reads, in one-letter code: Dihydroxy-acid dehydratase (570 aa).

Cys61 is a [2Fe-2S] cluster binding site. Asp94 serves as a coordination point for Mg(2+). Residue Cys135 participates in [2Fe-2S] cluster binding. Positions 136 and 137 each coordinate Mg(2+). Lys137 carries the N6-carboxylysine modification. [2Fe-2S] cluster is bound at residue Cys207. Mg(2+) is bound at residue Glu459. The Proton acceptor role is filled by Ser485.

Belongs to the IlvD/Edd family. As to quaternary structure, homodimer. The cofactor is [2Fe-2S] cluster. Mg(2+) is required as a cofactor.

The enzyme catalyses (2R)-2,3-dihydroxy-3-methylbutanoate = 3-methyl-2-oxobutanoate + H2O. It carries out the reaction (2R,3R)-2,3-dihydroxy-3-methylpentanoate = (S)-3-methyl-2-oxopentanoate + H2O. It participates in amino-acid biosynthesis; L-isoleucine biosynthesis; L-isoleucine from 2-oxobutanoate: step 3/4. The protein operates within amino-acid biosynthesis; L-valine biosynthesis; L-valine from pyruvate: step 3/4. Functionally, functions in the biosynthesis of branched-chain amino acids. Catalyzes the dehydration of (2R,3R)-2,3-dihydroxy-3-methylpentanoate (2,3-dihydroxy-3-methylvalerate) into 2-oxo-3-methylpentanoate (2-oxo-3-methylvalerate) and of (2R)-2,3-dihydroxy-3-methylbutanoate (2,3-dihydroxyisovalerate) into 2-oxo-3-methylbutanoate (2-oxoisovalerate), the penultimate precursor to L-isoleucine and L-valine, respectively. The protein is Dihydroxy-acid dehydratase of Lactococcus lactis subsp. lactis (strain IL1403) (Streptococcus lactis).